The following is a 969-amino-acid chain: RNA polymerase-associated protein RapA (969 aa).

The 171-residue stretch at 164–334 (EVGRRYAPRV…FARLRLLDPD (171 aa)) folds into the Helicase ATP-binding domain. 177 to 184 (DEVGLGKT) is a binding site for ATP. The short motif at 280–283 (DEAH) is the DEAH box element. Residues 492–672 (RVNWLLELLK…GLEPLIEESA (181 aa)) form the Helicase C-terminal domain.

It belongs to the SNF2/RAD54 helicase family. RapA subfamily. In terms of assembly, interacts with the RNAP. Has a higher affinity for the core RNAP than for the holoenzyme. Its ATPase activity is stimulated by binding to RNAP.

In terms of biological role, transcription regulator that activates transcription by stimulating RNA polymerase (RNAP) recycling in case of stress conditions such as supercoiled DNA or high salt concentrations. Probably acts by releasing the RNAP, when it is trapped or immobilized on tightly supercoiled DNA. Does not activate transcription on linear DNA. Probably not involved in DNA repair. This chain is RNA polymerase-associated protein RapA, found in Aliivibrio salmonicida (strain LFI1238) (Vibrio salmonicida (strain LFI1238)).